A 487-amino-acid chain; its full sequence is Serine/threonine-protein kinase 4 (487 aa).

N-acetylmethionine is present on Met1. Phosphothreonine is present on Thr3. A Protein kinase domain is found at 30-281 (FDVLEKLGEG…ATQLLQHPFV (252 aa)). ATP contacts are provided by residues 36 to 44 (LGEGSYGSV) and Lys59. Asp149 serves as the catalytic Proton acceptor. Thr183 carries the post-translational modification Phosphothreonine; by autocatalysis. Ser265 carries the post-translational modification Phosphoserine. Positions 290 to 310 (LRDLINEAMDVKLKRQESQQR) form a coiled coil. The segment covering 303–312 (KRQESQQREV) has biased composition (basic and acidic residues). Residues 303 to 332 (KRQESQQREVDQDDEENSEEDEMDSGTMVR) are disordered. Residues 313 to 326 (DQDDEENSEEDEMD) are compositionally biased toward acidic residues. Ser320 bears the Phosphoserine mark. Phosphothreonine is present on residues Thr340 and Thr367. Thr387 is subject to Phosphothreonine; by PKB/AKT1. Residues Ser410 and Ser414 each carry the phosphoserine modification. A Phosphotyrosine modification is found at Tyr433. The 48-residue stretch at 433–480 (YEFLKSWTVEDLQKRLLALDPMMEQEIEEIRQKYQSKRQPILDAIEAK) folds into the SARAH domain.

It belongs to the protein kinase superfamily. STE Ser/Thr protein kinase family. STE20 subfamily. In terms of assembly, homodimer; mediated via the coiled-coil region. Interacts with NORE1, which inhibits autoactivation. Interacts with and stabilizes SAV1. Interacts with RASSF1. Interacts with FOXO3. Interacts with RASSF2 (via SARAH domain). Interacts with AR, PKB/AKT1, TNNI3 and SIRT1. Interacts with DLG5 (via PDZ domain 3). Interacts with MARK3 and SCRIB in the presence of DLG5. Mg(2+) serves as cofactor. Post-translationally, autophosphorylated on serine and threonine residues. Phosphorylation at Thr-387 by PKB/AKT1, leads to inhibition of its: kinase activity, nuclear translocation and autophosphorylation at Thr-183. It also diminishes its cleavage by caspases and its ability to phosphorylate FOXO3. Proteolytically cleaved by caspase-3 during apoptosis at Asp-326 and Asp-349 resulting in a 37 kDa or a 39 kDa subunit respectively. The 39 kDa subunit is further cleaved into the 37 kDa form. Proteolytic cleavage results in kinase activation and nuclear translocation of the truncated form (MST1/N). It is less likely that cleavage at Asp-349 is a prerequisite for activation as this site is not conserved in the murine ortholog.

The protein resides in the cytoplasm. Its subcellular location is the nucleus. It catalyses the reaction L-seryl-[protein] + ATP = O-phospho-L-seryl-[protein] + ADP + H(+). The enzyme catalyses L-threonyl-[protein] + ATP = O-phospho-L-threonyl-[protein] + ADP + H(+). Its activity is regulated as follows. Inhibited by the C-terminal non-catalytic region. Activated by caspase-cleavage. Full activation also requires homodimerization and autophosphorylation of Thr-183. Activated by RASSF1 which acts by preventing its dephosphorylation. Stress-activated, pro-apoptotic kinase which, following caspase-cleavage, enters the nucleus and induces chromatin condensation followed by internucleosomal DNA fragmentation. Key component of the Hippo signaling pathway which plays a pivotal role in organ size control and tumor suppression by restricting proliferation and promoting apoptosis. The core of this pathway is composed of a kinase cascade wherein STK3/MST2 and STK4/MST1, in complex with its regulatory protein SAV1, phosphorylates and activates LATS1/2 in complex with its regulatory protein MOB1, which in turn phosphorylates and inactivates YAP1 oncoprotein and WWTR1/TAZ. Phosphorylation of YAP1 by LATS2 inhibits its translocation into the nucleus to regulate cellular genes important for cell proliferation, cell death, and cell migration. STK3/MST2 and STK4/MST1 are required to repress proliferation of mature hepatocytes, to prevent activation of facultative adult liver stem cells (oval cells), and to inhibit tumor formation. Phosphorylates 'Ser-14' of histone H2B (H2BS14ph) during apoptosis. Phosphorylates FOXO3 upon oxidative stress, which results in its nuclear translocation and cell death initiation. Phosphorylates MOBKL1A, MOBKL1B and RASSF2. Phosphorylates TNNI3 (cardiac Tn-I) and alters its binding affinity to TNNC1 (cardiac Tn-C) and TNNT2 (cardiac Tn-T). Phosphorylates FOXO1 on 'Ser-212' and regulates its activation and stimulates transcription of PMAIP1 in a FOXO1-dependent manner. Phosphorylates SIRT1 and inhibits SIRT1-mediated p53/TP53 deacetylation, thereby promoting p53/TP53 dependent transcription and apoptosis upon DNA damage. Acts as an inhibitor of PKB/AKT1. Phosphorylates AR on 'Ser-650' and suppresses its activity by intersecting with PKB/AKT1 signaling and antagonizing formation of AR-chromatin complexes. The sequence is that of Serine/threonine-protein kinase 4 (STK4) from Macaca mulatta (Rhesus macaque).